The following is a 137-amino-acid chain: uncharacterized protein (137 aa).

The next 2 helical transmembrane spans lie at 26–42 and 52–69; these read CSLC…FFAM and ASIP…GSIL.

It localises to the membrane. This is an uncharacterized protein from Saccharomyces cerevisiae (strain ATCC 204508 / S288c) (Baker's yeast).